We begin with the raw amino-acid sequence, 218 residues long: Cytidylate kinase (218 aa).

Position 7 to 15 (G7 to S15) interacts with ATP.

Belongs to the cytidylate kinase family. Type 1 subfamily.

The protein resides in the cytoplasm. The enzyme catalyses CMP + ATP = CDP + ADP. The catalysed reaction is dCMP + ATP = dCDP + ADP. The chain is Cytidylate kinase from Borrelia duttonii (strain Ly).